The primary structure comprises 245 residues: MNNKFDALKDDDSGDHDQNEENSTQKDGEKEKTDRDKSQSSGKRKAVVPGPAEHPLQYNYTFWYSRRTPGRPTSSQSYEQNIKQIGTFASVEQFWKFYSHMVRPGDLTGHSDFHLFKEGIKPMWEDDANKNGGKWIIRLRKGLASRCWENLILAMLGEQFMVGEEICGAVVSVRFQEDIISIWNKTASDQATTARIRDTLRRVLNLPPNTIMEYKTHTDSIKMPGRLGPQRLLFQNLWKPRLNVP.

The segment covering 1 to 38 (MNNKFDALKDDDSGDHDQNEENSTQKDGEKEKTDRDKS) has biased composition (basic and acidic residues). The tract at residues 1 to 52 (MNNKFDALKDDDSGDHDQNEENSTQKDGEKEKTDRDKSQSSGKRKAVVPGPA) is disordered. Ser13 bears the Phosphoserine mark. The interval 54–57 (HPLQ) is EIF4EBP1/2/3 binding. Residue 78 to 79 (YE) participates in mRNA binding. Residues 95–99 (WKFYS) form an EIF4EBP1/2/3 binding region. Residues His110 and 124–125 (WE) contribute to the mRNA site. The residue at position 134 (Lys134) is an N6-acetyllysine; alternate. Residue Lys134 forms a Glycyl lysine isopeptide (Lys-Gly) (interchain with G-Cter in ISG15); alternate linkage. The tract at residues 150 to 157 (NLILAMLG) is EIF4EBP1/2/3 binding. MRNA is bound by residues 174–179 (RFQEDI) and 222–224 (KMP). Lys222 participates in a covalent cross-link: Glycyl lysine isopeptide (Lys-Gly) (interchain with G-Cter in ISG15).

This sequence belongs to the eukaryotic initiation factor 4E family. In terms of assembly, interacts with EIF4EBP1, EIF4EBP2 and EIF4EBP3. Does not interact with eIF4G (EIF4G1, EIF4G2 or EIF4G3). Component of the 4EHP-GYF2 complex, at least composed of EIF4E2, GIGYF2 and ZNF598. Interacts with GIGYF2 (via the 4EHP-binding motif); the interaction is direct. Interacts with EIF4ENIF1/4E-T (via YXXXXLphi motif); increasing affinity for the 7-methylguanosine-containing mRNA cap. Ubiquitinated by ARIH1. The consequences of ubiquitination are however unclear: according to a report, EIF4E2 ubiquitination leads to promote EIF4E2 cap-binding and protein translation arrest. According to another report ubiquitination leads to its subsequent degradation. In terms of processing, ISGylation enhances its cap structure-binding activity and translation-inhibition activity. Widely expressed with highest levels in testis, kidney and liver.

Its subcellular location is the cytoplasm. The protein localises to the P-body. Recognizes and binds the 7-methylguanosine-containing mRNA cap during an early step in the initiation. Acts as a repressor of translation initiation. In contrast to EIF4E, it is unable to bind eIF4G (EIF4G1, EIF4G2 or EIF4G3), suggesting that it acts by competing with EIF4E and block assembly of eIF4F at the cap. In P-bodies, component of a complex that promotes miRNA-mediated translational repression. Involved in virus-induced host response by mediating miRNA MIR34A-induced translational silencing which controls IFNB1 production by a negative feedback mechanism. Functionally, component of the 4EHP-GYF2 complex, a multiprotein complex that acts as a repressor of translation initiation. In association with GIGYF2, assists ribosome-associated quality control (RQC) by sequestering the mRNA cap, blocking ribosome initiation and decreasing the translational load on problematic messages. Part of a pathway that works in parallel to RQC-mediated degradation of the stalled nascent polypeptide. GIGYF2 and EIF4E2 work downstream and independently of ZNF598, which seems to work as a scaffold that can recruit them to faulty mRNA even if alternative recruitment mechanisms may exist. This Mus musculus (Mouse) protein is Eukaryotic translation initiation factor 4E type 2.